The following is a 384-amino-acid chain: Adaptive-response sensory kinase SasA (384 aa).

The Histidine kinase domain maps to 162-384 (MLAHDLRSPL…SFHFTLPVYR (223 aa)). His-165 is modified (phosphohistidine; by autocatalysis).

In terms of assembly, homooligomerizes. Interacts with KaiC. Participates in the KaiABC clock complex, whose core is composed of a KaiC homohexamer, 6 KaiB and up to 6 KaiA dimers. SasA and KaiB(fs) compete to bind to KaiC.

The enzyme catalyses ATP + protein L-histidine = ADP + protein N-phospho-L-histidine.. In terms of biological role, member of the two-component regulatory system SasA/RpaA involved in genome-wide circadian gene expression. One of several clock output pathways. Participates in the Kai clock protein complex, the main circadian regulator in cyanobacteria, via its interaction with KaiC. KaiC enhances the autophosphorylation activity of SasA, which then transfers its phosphate group to RpaA to activate it. In addition to its output function, recruits fold-shifted KaiB (KaiB(fs)) to KaiC to cooperatively form the KaiB(6):KaiC(6) complex (independent of SasA kinase activity). Required for robustness of the circadian rhythm of gene expression and is involved in clock output, also required for adaptation to light/dark cycles. The protein is Adaptive-response sensory kinase SasA of Microcystis aeruginosa (strain NIES-843 / IAM M-2473).